A 921-amino-acid chain; its full sequence is Alanine--tRNA ligase (921 aa).

4 residues coordinate Zn(2+): His-602, His-606, Cys-706, and His-710.

Belongs to the class-II aminoacyl-tRNA synthetase family. Requires Zn(2+) as cofactor.

The protein resides in the cytoplasm. The catalysed reaction is tRNA(Ala) + L-alanine + ATP = L-alanyl-tRNA(Ala) + AMP + diphosphate. Its function is as follows. Catalyzes the attachment of alanine to tRNA(Ala) in a two-step reaction: alanine is first activated by ATP to form Ala-AMP and then transferred to the acceptor end of tRNA(Ala). Also edits incorrectly charged Ser-tRNA(Ala) and Gly-tRNA(Ala) via its editing domain. In Hyperthermus butylicus (strain DSM 5456 / JCM 9403 / PLM1-5), this protein is Alanine--tRNA ligase.